We begin with the raw amino-acid sequence, 297 residues long: Probable GTP 3',8-cyclase (297 aa).

In terms of domain architecture, Radical SAM core spans 4 to 227 (RYGRQIRSFR…MQNRKKYVID (224 aa)). Arg13 is a GTP binding site. [4Fe-4S] cluster is bound by residues Cys20 and Cys24. Tyr26 lines the S-adenosyl-L-methionine pocket. Cys27 serves as a coordination point for [4Fe-4S] cluster. Lys61 contributes to the GTP binding site. Gly65 serves as a coordination point for S-adenosyl-L-methionine. Thr91 provides a ligand contact to GTP. An S-adenosyl-L-methionine-binding site is contributed by Ser115. Lys152 provides a ligand contact to GTP. Positions 243 and 246 each coordinate [4Fe-4S] cluster. 248-250 (RIR) contacts GTP. Residue Cys260 coordinates [4Fe-4S] cluster.

It belongs to the radical SAM superfamily. MoaA family. Requires [4Fe-4S] cluster as cofactor.

The catalysed reaction is GTP + AH2 + S-adenosyl-L-methionine = (8S)-3',8-cyclo-7,8-dihydroguanosine 5'-triphosphate + 5'-deoxyadenosine + L-methionine + A + H(+). The protein operates within cofactor biosynthesis; molybdopterin biosynthesis. Catalyzes the cyclization of GTP to (8S)-3',8-cyclo-7,8-dihydroguanosine 5'-triphosphate. In Methanococcus maripaludis (strain DSM 14266 / JCM 13030 / NBRC 101832 / S2 / LL), this protein is Probable GTP 3',8-cyclase.